The chain runs to 140 residues: Class I hydrophobin C (140 aa).

The first 23 residues, 1-23, serve as a signal peptide directing secretion; it reads MKFFVPAFLFAATAMALPGSGSA. 4 disulfides stabilise this stretch: C41–C114, C49–C108, C50–C85, and C115–C133.

This sequence belongs to the fungal hydrophobin family.

The protein resides in the secreted. The protein localises to the cell wall. Its function is as follows. Aerial growth, conidiation, and dispersal of filamentous fungi in the environment rely upon a capability of their secreting small amphipathic proteins called hydrophobins (HPBs) with low sequence identity. Class I can self-assemble into an outermost layer of rodlet bundles on aerial cell surfaces, conferring cellular hydrophobicity that supports fungal growth, development and dispersal; whereas Class II form highly ordered films at water-air interfaces through intermolecular interactions but contribute nothing to the rodlet structure. In P.expansum, hydrophobins contribute to germination, tolerance to cold stress and mycotoxins patulin and citrinin production. HfbC is involved in the virulence on apple. This chain is Class I hydrophobin C, found in Penicillium expansum (Blue mold rot fungus).